Reading from the N-terminus, the 861-residue chain is 1,4-alpha-glucan-branching enzyme (861 aa).

Residues tryptophan 173 and lysine 208 each contribute to the (1,4-alpha-D-glucosyl)n site. Residue aspartate 429 is the Nucleophile of the active site. Glutamate 484 acts as the Proton donor in catalysis.

It belongs to the glycosyl hydrolase 13 family. GlgB subfamily. Monomer.

The protein localises to the plastid. It is found in the chloroplast. It localises to the amyloplast. It carries out the reaction Transfers a segment of a (1-&gt;4)-alpha-D-glucan chain to a primary hydroxy group in a similar glucan chain.. Its pathway is glycan biosynthesis; starch biosynthesis. In terms of biological role, catalyzes the formation of the alpha-1,6-glucosidic linkages in starch by scission of a 1,4-alpha-linked oligosaccharide from growing alpha-1,4-glucan chains and the subsequent attachment of the oligosaccharide to the alpha-1,6 position. The chain is 1,4-alpha-glucan-branching enzyme (SBE1) from Solanum tuberosum (Potato).